Consider the following 671-residue polypeptide: Probable potassium transport system protein Kup (671 aa).

The segment at 1–43 is disordered; it reads MSQIPSPNDPASTGAAPSSAAVPAGPSATPAPSPTAGFSLPGH. Positions 10-37 are enriched in low complexity; the sequence is PASTGAAPSSAAVPAGPSATPAPSPTAG. 12 helical membrane-spanning segments follow: residues 52–72, 92–112, 147–167, 181–201, 209–229, 255–275, 291–311, 323–343, 381–401, 407–427, 441–461, and 465–485; these read LAAL…TSPL, VLGV…FKYM, LMLG…TPAI, PAME…LFLF, VGAV…VLGV, GWHG…GEAL, WLGL…ALLL, LLAP…AAIV, IYLP…VLGF, LASA…LLFH, AWPL…ANVV, and DGGW…STWK.

Belongs to the HAK/KUP transporter (TC 2.A.72) family.

It is found in the cell inner membrane. It carries out the reaction K(+)(in) + H(+)(in) = K(+)(out) + H(+)(out). In terms of biological role, transport of potassium into the cell. Likely operates as a K(+):H(+) symporter. The polypeptide is Probable potassium transport system protein Kup (Anaeromyxobacter dehalogenans (strain 2CP-1 / ATCC BAA-258)).